The sequence spans 359 residues: Dual-specificity RNA methyltransferase RlmN (359 aa).

Glu98 (proton acceptor) is an active-site residue. A Radical SAM core domain is found at 104-329 (EPKRGTLCIS…LEHGLTATIR (226 aa)). Cys111 and Cys340 are disulfide-bonded. Positions 118, 122, and 125 each coordinate [4Fe-4S] cluster. Residues 166–167 (GE), Ser198, 220–222 (SLH), and Asn297 contribute to the S-adenosyl-L-methionine site. Cys340 (S-methylcysteine intermediate) is an active-site residue.

The protein belongs to the radical SAM superfamily. RlmN family. [4Fe-4S] cluster serves as cofactor.

The protein resides in the cytoplasm. The catalysed reaction is adenosine(2503) in 23S rRNA + 2 reduced [2Fe-2S]-[ferredoxin] + 2 S-adenosyl-L-methionine = 2-methyladenosine(2503) in 23S rRNA + 5'-deoxyadenosine + L-methionine + 2 oxidized [2Fe-2S]-[ferredoxin] + S-adenosyl-L-homocysteine. It carries out the reaction adenosine(37) in tRNA + 2 reduced [2Fe-2S]-[ferredoxin] + 2 S-adenosyl-L-methionine = 2-methyladenosine(37) in tRNA + 5'-deoxyadenosine + L-methionine + 2 oxidized [2Fe-2S]-[ferredoxin] + S-adenosyl-L-homocysteine. Functionally, specifically methylates position 2 of adenine 2503 in 23S rRNA and position 2 of adenine 37 in tRNAs. m2A2503 modification seems to play a crucial role in the proofreading step occurring at the peptidyl transferase center and thus would serve to optimize ribosomal fidelity. This is Dual-specificity RNA methyltransferase RlmN from Halorhodospira halophila (strain DSM 244 / SL1) (Ectothiorhodospira halophila (strain DSM 244 / SL1)).